Here is a 142-residue protein sequence, read N- to C-terminus: MAQKPTSTGPSQRQQRVAELVRHALAEVLQRGDIQDPVLGTHVVTVPEVRMSPDLKLATAYVMPLGGLDEAPVIAALERHRKVLRQAVARRVNLKFAPELRFRRDETFDEAARIDRLLRDERVQRDLDSAPEDDEPETGTGH.

The interval valine 123–histidine 142 is disordered. Over residues serine 129–histidine 142 the composition is skewed to acidic residues.

The protein belongs to the RbfA family. In terms of assembly, monomer. Binds 30S ribosomal subunits, but not 50S ribosomal subunits or 70S ribosomes.

It localises to the cytoplasm. In terms of biological role, one of several proteins that assist in the late maturation steps of the functional core of the 30S ribosomal subunit. Associates with free 30S ribosomal subunits (but not with 30S subunits that are part of 70S ribosomes or polysomes). Required for efficient processing of 16S rRNA. May interact with the 5'-terminal helix region of 16S rRNA. The polypeptide is Ribosome-binding factor A (Methylobacterium radiotolerans (strain ATCC 27329 / DSM 1819 / JCM 2831 / NBRC 15690 / NCIMB 10815 / 0-1)).